Reading from the N-terminus, the 492-residue chain is MKKGSVGNVETKTYALPNELVLKSGKTLKEVNIAYETYGKLNKDKNNAILVFHALSGNAHAAGIHKTDGKLGWWDALIGPLKCIDTNKYFVICSNVLGGCNGTTGPSSINPDTNKPYGIDFPVITISDMVTLQKNLIDHLGIKKLFSIIGGSMGGMQALEWCATYPEVINSAVIIATTSSSSPQQIAFNEIGRRAIMSDPKWDGGKYYYKNQPSEGLALARMIGHVTYLSKDSMHEKFGRCLQDKNEYGFNFETDFQVESYLKYQGDSFTKRFDANSYLYLTKALDYFDLTKNGSLSDAFEKLSAKIMIVSINSDWLYTPEEAKEIVSAMSTSGINVKYHEIKSIYGHDAFLIENGQMSYIISEFLSEKIVENIMTKNFSTIYENETIKKAASLMVSKNITHIPVVSNENKLLGIITAWDVSKSIAEENSIENIKISQMMTKNVITAFIDDKIEKIAIKMQEYNISCLPVVDQNGLVIGMISAENITNTITI.

Residues 47–352 (NAILVFHALS…KSIYGHDAFL (306 aa)) form the AB hydrolase-1 domain. Ser152 serves as the catalytic Nucleophile. Substrate is bound at residue Arg221. Active-site residues include Asp315 and His348. Asp349 provides a ligand contact to substrate. 2 consecutive CBS domains span residues 375-431 (MTKN…ENSI) and 440-492 (MTKN…TITI).

Belongs to the AB hydrolase superfamily. MetX family. As to quaternary structure, homodimer.

Its subcellular location is the cytoplasm. The catalysed reaction is L-homoserine + acetyl-CoA = O-acetyl-L-homoserine + CoA. It functions in the pathway amino-acid biosynthesis; L-methionine biosynthesis via de novo pathway; O-acetyl-L-homoserine from L-homoserine: step 1/1. In terms of biological role, transfers an acetyl group from acetyl-CoA to L-homoserine, forming acetyl-L-homoserine. The sequence is that of Homoserine O-acetyltransferase from Methanococcus vannielii (strain ATCC 35089 / DSM 1224 / JCM 13029 / OCM 148 / SB).